The sequence spans 214 residues: Probable transaldolase (214 aa).

The active-site Schiff-base intermediate with substrate is the lysine 83.

This sequence belongs to the transaldolase family. Type 3B subfamily.

The protein resides in the cytoplasm. The enzyme catalyses D-sedoheptulose 7-phosphate + D-glyceraldehyde 3-phosphate = D-erythrose 4-phosphate + beta-D-fructose 6-phosphate. The protein operates within carbohydrate degradation; pentose phosphate pathway; D-glyceraldehyde 3-phosphate and beta-D-fructose 6-phosphate from D-ribose 5-phosphate and D-xylulose 5-phosphate (non-oxidative stage): step 2/3. In terms of biological role, transaldolase is important for the balance of metabolites in the pentose-phosphate pathway. This Clostridium tetani (strain Massachusetts / E88) protein is Probable transaldolase.